The following is a 200-amino-acid chain: MNSVGRRGPRRANQNGTRRRRRRTVRPVVVVQPNRAGPRRRNGRRKGRGGANFVFRPTGGTEVFVFSVDNLKANSSGAIKFGPSLSQCPALSDGILKSYHRYKITSIRVEFKSHASANTAGAIFIELDTACKQSALGSYINSFTISKTASKTFRSEAINGKEFQESTIDQFWMLYKANGTTTDTAGQFIITMSVSLMTAK.

2 disordered regions span residues 1–25 and 33–52; these read MNSV…RRTV and PNRA…GGAN. The span at 37–48 shows a compositional bias: basic residues; the sequence is GPRRRNGRRKGR.

This sequence belongs to the luteoviruses capsid protein family.

It localises to the virion. Its function is as follows. Major capsid protein. This chain is Major capsid protein, found in Avena byzantina (Oat).